The primary structure comprises 299 residues: Ectoine dioxygenase (299 aa).

Residues 1–40 (MTTTTTNVTDLYPTRGATEVATPRQDPVVWGSPDAPGPVS) form a disordered region. Gln133 contacts L-ectoine. Residue Lys139 coordinates 2-oxoglutarate. Fe cation is bound by residues His150, Asp152, and His251.

Belongs to the PhyH family. EctD subfamily. In terms of assembly, homodimer. Fe(2+) serves as cofactor.

The enzyme catalyses L-ectoine + 2-oxoglutarate + O2 = 5-hydroxyectoine + succinate + CO2. Involved in the biosynthesis of 5-hydroxyectoine, called compatible solute, which helps organisms to survive extreme osmotic stress by acting as a highly soluble organic osmolyte. Catalyzes the 2-oxoglutarate-dependent selective hydroxylation of L-ectoine to yield (4S,5S)-5-hydroxyectoine. The sequence is that of Ectoine dioxygenase from Streptomyces coelicolor (strain ATCC BAA-471 / A3(2) / M145).